We begin with the raw amino-acid sequence, 460 residues long: Protein Peter pan (460 aa).

A Brix domain is found at 28 to 290 (PHSFVIHRGL…LIKIEEGLLT (263 aa)). S237 and S239 each carry phosphoserine. Residues 295 to 350 (YHDHVVKTEDEKETLRKLVEKKRKQKEQRKKEQAENRARNLKLKKDEKWAAKRAAE) adopt a coiled-coil conformation. The interval 315 to 460 (KKRKQKEQRK…FDHRKSRKSK (146 aa)) is disordered. Composition is skewed to basic and acidic residues over residues 323 to 355 (RKKE…RTDS) and 401 to 446 (AKLD…DPKN). Phosphothreonine is present on T353. S355 carries the phosphoserine modification. Over residues 447 to 460 (KRAKFDHRKSRKSK) the composition is skewed to basic residues.

This sequence belongs to the PPAN family. As to expression, ubiquitous.

Its function is as follows. Required for initiation of larval growth and normal mitotic growth but is not absolutely required for general biosynthesis or DNA replication. Required for progression of normal oogenesis and maturation of some imaginal tissues into adult structures. The chain is Protein Peter pan (ppan) from Drosophila melanogaster (Fruit fly).